The primary structure comprises 497 residues: uncharacterized protein (497 aa).

The tract at residues 474–497 (DPRNPFSNGKPSGWSDEDVAWLKR) is disordered. The span at 488-497 (SDEDVAWLKR) shows a compositional bias: acidic residues.

This is an uncharacterized protein from Bacillus anthracis.